We begin with the raw amino-acid sequence, 119 residues long: Beta-2-microglobulin (119 aa).

An N-terminal signal peptide occupies residues 1 to 20 (MARSVVVALLVLLSLSGLEA). Residues 25 to 114 (PKIQVYSRHP…VTFSTPKTVK (90 aa)) enclose the Ig-like C1-type domain. Cysteine 45 and cysteine 100 are joined by a disulfide.

It belongs to the beta-2-microglobulin family. As to quaternary structure, heterodimer of an alpha chain and a beta chain. Beta-2-microglobulin is the beta-chain of major histocompatibility complex class I molecules.

The protein resides in the secreted. Functionally, component of the class I major histocompatibility complex (MHC). Involved in the presentation of peptide antigens to the immune system. This Ateles paniscus (Black spider monkey) protein is Beta-2-microglobulin (B2M).